The chain runs to 435 residues: Sex peptide receptor (435 aa).

At 1–93 (MDNYTDVLYQ…PLEYAMPLYG (93 aa)) the chain is on the extracellular side. Residues 94 to 114 (YCMPFLLIITIISNSLIVLVL) traverse the membrane as a helical segment. Residues 115–124 (SKKSMATPTN) lie on the Cytoplasmic side of the membrane. Residues 125 to 145 (FVLMGMAICDMLTVIFPAPGL) form a helical membrane-spanning segment. The Extracellular portion of the chain corresponds to 146-168 (WYMYTFGNHYKPLHPVSMCLAYS). A helical membrane pass occupies residues 169 to 189 (IFNEIMPAMCHTISVWLTLAL). The Cytoplasmic segment spans residues 190–211 (AVQRYIYVCHAPMARTWCTMPR). A helical transmembrane segment spans residues 212-229 (VRRCTAYIALLAFLHQLP). Topologically, residues 230–276 (RFFDRTYMPLVIEWNGSPTEVCHLETSMWVHDYIGVDLYYTSYYLFR) are extracellular. Residues 277–297 (VLFVHLLPCIILVTLNILLFA) traverse the membrane as a helical segment. Over 298–327 (AMRQAQERRKLLFRENRKKECKKLRETNCT) the chain is Cytoplasmic. A helical transmembrane segment spans residues 328 to 348 (TLMLIVVVSVFLLAEIPIAVV). The Extracellular segment spans residues 349–368 (TAMHIVSSLIIEFLDYGLAN). The helical transmembrane segment at 369 to 389 (ICIMLTNFFLVFSYPINFGIY) threads the bilayer. Over 390–435 (CGMSRQFRETFKEIFLGRLMAKKDSSTKYSIVNGARTCTNTNETVL) the chain is Cytoplasmic.

Belongs to the G-protein coupled receptor 1 family. In terms of tissue distribution, in the female, expressed in the reproductive organs; strongly expressed in the spermathecae and the lower oviduct. No expression in the male reproductive organs. In the central nervous system of both sexes, it is expressed in the brain and ventral nerve cord (VNC); strongly expressed in the ventral regions of the suboesophageal ganglion, the cervical connective and in many nerve roots of the brain and VNC. Expressed in the s-LNvs and l-LNvs pdf neurons (at protein level).

The protein resides in the cell membrane. Receptor for two functionally unrelated ligands; SP (A70A) for controlling reproductive behaviors and MIP for controlling sleep behavior. MIP-SPR pathway functions as a sleep homeostat which perceives the need for sleep and stabilizes it by providing a slow-acting inhibitory input to the fly arousal system that involve the pigment dispersing factor (pdf) neurons. SP-SPR is one of the multiple SP pathways that induce female post-mating behavioral responses (PMR) such as the suppression of mating receptivity and initiation of egg laying. The PMR switch is achieved by mediating the synaptic output of neurons such as those expressing fruitless (fru), double sex (dsx) and pickpocket (ppk). The polypeptide is Sex peptide receptor (Drosophila melanogaster (Fruit fly)).